Here is a 209-residue protein sequence, read N- to C-terminus: Small ribosomal subunit protein uS4 (209 aa).

Residues 22–45 (RGRNPLLRKPNPPGQHGMQRKKKS) form a disordered region. Positions 93 to 154 (CRLDSIVYRL…KSKRLAIVTE (62 aa)) constitute an S4 RNA-binding domain.

It belongs to the universal ribosomal protein uS4 family. As to quaternary structure, part of the 30S ribosomal subunit. Contacts protein S5. The interaction surface between S4 and S5 is involved in control of translational fidelity.

One of the primary rRNA binding proteins, it binds directly to 16S rRNA where it nucleates assembly of the body of the 30S subunit. Functionally, with S5 and S12 plays an important role in translational accuracy. The chain is Small ribosomal subunit protein uS4 from Chlamydia trachomatis serovar L2 (strain ATCC VR-902B / DSM 19102 / 434/Bu).